A 628-amino-acid polypeptide reads, in one-letter code: Probable potassium transport system protein Kup 1 (628 aa).

12 helical membrane passes run 18 to 38 (ITLA…LYAL), 58 to 78 (IVSL…VLLV), 106 to 126 (ALLM…AVIT), 141 to 161 (ITPE…VILF), 175 to 195 (FGPI…YEIV), 219 to 239 (IAFI…ALYA), 253 to 273 (WGSL…ALLL), 285 to 305 (LLAP…ATVI), 343 to 363 (IYLP…IIWF), 371 to 391 (AAYG…LMVV), 401 to 421 (WLIA…FAAN), and 425 to 445 (FLAG…VMTT).

It belongs to the HAK/KUP transporter (TC 2.A.72) family.

It is found in the cell inner membrane. The enzyme catalyses K(+)(in) + H(+)(in) = K(+)(out) + H(+)(out). In terms of biological role, transport of potassium into the cell. Likely operates as a K(+):H(+) symporter. The protein is Probable potassium transport system protein Kup 1 of Aeromonas hydrophila subsp. hydrophila (strain ATCC 7966 / DSM 30187 / BCRC 13018 / CCUG 14551 / JCM 1027 / KCTC 2358 / NCIMB 9240 / NCTC 8049).